A 287-amino-acid polypeptide reads, in one-letter code: Cyclopropane mycolic acid synthase 3 (287 aa).

Residues Tyr-33–Ser-34, Leu-68–Gly-76, Thr-94–Gln-99, and Trp-123–Glu-124 contribute to the S-adenosyl-L-methionine site. The active site involves Cys-269.

The protein belongs to the CFA/CMAS family. Homodimer.

It is found in the cytoplasm. The catalysed reaction is a 1-acyl-2-(9Z)-enoyl-sn-glycero-3-phospholipid + S-adenosyl-L-methionine = a 1-acyl-2-(9-cyclopronane)-acyl-sn-glycero-3-phospholipid + S-adenosyl-L-homocysteine + H(+). It participates in lipid metabolism; mycolic acid biosynthesis. Its function is as follows. Involved in the phagosome maturation block (PMB). Catalyzes the conversion of a double bond to a cyclopropane ring at the proximal position of an alpha mycolic acid via the transfer of a methylene group from S-adenosyl-L-methionine. It can use cis, cis 11,14-eicosadienoic acid and linoelaidic acid as substrate. Cyclopropanated mycolic acids are key factors participating in cell envelope permeability, host immunomodulation and persistence. The sequence is that of Cyclopropane mycolic acid synthase 3 (pcaA) from Mycobacterium tuberculosis (strain CDC 1551 / Oshkosh).